The sequence spans 107 residues: Homeobox protein HD-3 (107 aa).

Residues 6–65 (SKAPRTRMTAGQTRVLMSFFKDNPFPSTTAREKLSKVLGVGPRTVQIWFQNQRQKARGQA) constitute a DNA-binding region (homeobox).

It localises to the nucleus. The chain is Homeobox protein HD-3 (HD-3) from Encephalitozoon cuniculi (strain GB-M1) (Microsporidian parasite).